Reading from the N-terminus, the 361-residue chain is Chorismate synthase (361 aa).

Residues arginine 48 and arginine 54 each contribute to the NADP(+) site. Residues 125-127, 238-239, glycine 278, 293-297, and arginine 319 contribute to the FMN site; these read RSS, NA, and KPTSS.

This sequence belongs to the chorismate synthase family. Homotetramer. The cofactor is FMNH2.

It carries out the reaction 5-O-(1-carboxyvinyl)-3-phosphoshikimate = chorismate + phosphate. It functions in the pathway metabolic intermediate biosynthesis; chorismate biosynthesis; chorismate from D-erythrose 4-phosphate and phosphoenolpyruvate: step 7/7. Functionally, catalyzes the anti-1,4-elimination of the C-3 phosphate and the C-6 proR hydrogen from 5-enolpyruvylshikimate-3-phosphate (EPSP) to yield chorismate, which is the branch point compound that serves as the starting substrate for the three terminal pathways of aromatic amino acid biosynthesis. This reaction introduces a second double bond into the aromatic ring system. The sequence is that of Chorismate synthase from Shigella boydii serotype 18 (strain CDC 3083-94 / BS512).